The following is a 299-amino-acid chain: N-acetylmuramic acid 6-phosphate etherase (299 aa).

The SIS domain maps to 54–217; the sequence is TIAQYKKGGR…STITMVGVGK (164 aa). Glu82 serves as the catalytic Proton donor. Glu113 is an active-site residue.

Belongs to the GCKR-like family. MurNAc-6-P etherase subfamily. As to quaternary structure, homodimer.

The catalysed reaction is N-acetyl-D-muramate 6-phosphate + H2O = N-acetyl-D-glucosamine 6-phosphate + (R)-lactate. Its pathway is amino-sugar metabolism; N-acetylmuramate degradation. Specifically catalyzes the cleavage of the D-lactyl ether substituent of MurNAc 6-phosphate, producing GlcNAc 6-phosphate and D-lactate. The sequence is that of N-acetylmuramic acid 6-phosphate etherase from Staphylococcus aureus (strain USA300).